Reading from the N-terminus, the 732-residue chain is Phosphoribosylformylglycinamidine synthase subunit PurL (732 aa).

The active site involves His-32. An ATP-binding site is contributed by Tyr-35. Glu-81 lines the Mg(2+) pocket. Substrate-binding positions include 82–85 (SHNH) and Arg-104. The active-site Proton acceptor is His-83. Mg(2+) is bound at residue Asp-105. Gln-230 contacts substrate. Asp-258 serves as a coordination point for Mg(2+). Position 302–304 (302–304 (ESQ)) interacts with substrate. 2 residues coordinate ATP: Asp-485 and Gly-522. Asn-523 is a binding site for Mg(2+). Position 525 (Ser-525) interacts with substrate.

This sequence belongs to the FGAMS family. Monomer. Part of the FGAM synthase complex composed of 1 PurL, 1 PurQ and 2 PurS subunits.

It is found in the cytoplasm. It catalyses the reaction N(2)-formyl-N(1)-(5-phospho-beta-D-ribosyl)glycinamide + L-glutamine + ATP + H2O = 2-formamido-N(1)-(5-O-phospho-beta-D-ribosyl)acetamidine + L-glutamate + ADP + phosphate + H(+). It functions in the pathway purine metabolism; IMP biosynthesis via de novo pathway; 5-amino-1-(5-phospho-D-ribosyl)imidazole from N(2)-formyl-N(1)-(5-phospho-D-ribosyl)glycinamide: step 1/2. Part of the phosphoribosylformylglycinamidine synthase complex involved in the purines biosynthetic pathway. Catalyzes the ATP-dependent conversion of formylglycinamide ribonucleotide (FGAR) and glutamine to yield formylglycinamidine ribonucleotide (FGAM) and glutamate. The FGAM synthase complex is composed of three subunits. PurQ produces an ammonia molecule by converting glutamine to glutamate. PurL transfers the ammonia molecule to FGAR to form FGAM in an ATP-dependent manner. PurS interacts with PurQ and PurL and is thought to assist in the transfer of the ammonia molecule from PurQ to PurL. This is Phosphoribosylformylglycinamidine synthase subunit PurL from Methanococcus aeolicus (strain ATCC BAA-1280 / DSM 17508 / OCM 812 / Nankai-3).